Consider the following 51-residue polypeptide: Mating pheromone Er-23 (51 aa).

5 disulfide bridges follow: Cys-3–Cys-24, Cys-6–Cys-16, Cys-13–Cys-47, Cys-27–Cys-40, and Cys-35–Cys-51.

The protein localises to the secreted. Mating ciliate pheromones (or gamones) are diffusible extracellular communication signals that distinguish different intraspecific classes of cells commonly referred to as 'mating types'. They prepare the latter for conjugation by changing their cell surface properties. In Euplotes raikovi, this protein is Mating pheromone Er-23 (MAT23).